A 497-amino-acid chain; its full sequence is Cytochrome P450 3A18 (497 aa).

Cys442 serves as a coordination point for heme.

Belongs to the cytochrome P450 family. Heme serves as cofactor.

The protein resides in the endoplasmic reticulum membrane. It is found in the microsome membrane. The enzyme catalyses an organic molecule + reduced [NADPH--hemoprotein reductase] + O2 = an alcohol + oxidized [NADPH--hemoprotein reductase] + H2O + H(+). Functionally, catalyzes 16-beta- and 6-alpha-hydroxylations of testosterone. This is Cytochrome P450 3A18 (Cyp3a18) from Rattus norvegicus (Rat).